We begin with the raw amino-acid sequence, 498 residues long: Probable cytosol aminopeptidase (498 aa).

2 residues coordinate Mn(2+): Lys267 and Asp272. Lys279 is a catalytic residue. Positions 290, 349, and 351 each coordinate Mn(2+). Residue Arg353 is part of the active site.

It belongs to the peptidase M17 family. Requires Mn(2+) as cofactor.

It is found in the cytoplasm. It carries out the reaction Release of an N-terminal amino acid, Xaa-|-Yaa-, in which Xaa is preferably Leu, but may be other amino acids including Pro although not Arg or Lys, and Yaa may be Pro. Amino acid amides and methyl esters are also readily hydrolyzed, but rates on arylamides are exceedingly low.. It catalyses the reaction Release of an N-terminal amino acid, preferentially leucine, but not glutamic or aspartic acids.. In terms of biological role, presumably involved in the processing and regular turnover of intracellular proteins. Catalyzes the removal of unsubstituted N-terminal amino acids from various peptides. In Dechloromonas aromatica (strain RCB), this protein is Probable cytosol aminopeptidase.